The following is a 483-amino-acid chain: Glutamyl-tRNA(Gln) amidotransferase subunit A (483 aa).

Residues K77 and S152 each act as charge relay system in the active site. The active-site Acyl-ester intermediate is S176.

Belongs to the amidase family. GatA subfamily. Heterotrimer of A, B and C subunits.

It catalyses the reaction L-glutamyl-tRNA(Gln) + L-glutamine + ATP + H2O = L-glutaminyl-tRNA(Gln) + L-glutamate + ADP + phosphate + H(+). Allows the formation of correctly charged Gln-tRNA(Gln) through the transamidation of misacylated Glu-tRNA(Gln) in organisms which lack glutaminyl-tRNA synthetase. The reaction takes place in the presence of glutamine and ATP through an activated gamma-phospho-Glu-tRNA(Gln). This Listeria welshimeri serovar 6b (strain ATCC 35897 / DSM 20650 / CCUG 15529 / CIP 8149 / NCTC 11857 / SLCC 5334 / V8) protein is Glutamyl-tRNA(Gln) amidotransferase subunit A.